The primary structure comprises 258 residues: Global transcriptional regulator CodY (258 aa).

Positions 1–156 (MSILLNKTRK…SATIVGLEIL (156 aa)) are GAF domain. A DNA-binding region (H-T-H motif) is located at residues 204 to 223 (ASKIADKVGITRSVIVNALR).

The protein belongs to the CodY family.

Its subcellular location is the cytoplasm. DNA-binding global transcriptional regulator which is involved in the adaptive response to starvation and acts by directly or indirectly controlling the expression of numerous genes in response to nutrient availability. During rapid exponential growth, CodY is highly active and represses genes whose products allow adaptation to nutrient depletion. In Clostridium acetobutylicum (strain ATCC 824 / DSM 792 / JCM 1419 / IAM 19013 / LMG 5710 / NBRC 13948 / NRRL B-527 / VKM B-1787 / 2291 / W), this protein is Global transcriptional regulator CodY.